A 1967-amino-acid polypeptide reads, in one-letter code: RQC trigger complex helicase SLH1 (1967 aa).

Positions 297–485 (PVAYKTNENM…FLGVNRQIGM (189 aa)) constitute a Helicase ATP-binding 1 domain. An ATP-binding site is contributed by 310 to 317 (APTGAGKT). The short motif at 427 to 430 (DEVH) is the DEVH box element. The region spanning 516-735 (NIDKVAYDKL…NVDEAIEWLG (220 aa)) is the Helicase C-terminal 1 domain. One can recognise an SEC63 1 domain in the interval 795–1100 (AKDLGRVSSD…GCESTHAISF (306 aa)). The Helicase ATP-binding 2 domain maps to 1149–1324 (YTLYNTNENA…WLGVKDHGLY (176 aa)). 1162 to 1169 (SPTGSGKT) contacts ATP. The DEAH box signature appears at 1266–1269 (DEIH). A Helicase C-terminal 2 domain is found at 1355-1550 (MNKPVFMAIK…SLHKVLDDHL (196 aa)). The SEC63 2 domain occupies 1626–1776 (ATPFLSISSY…MMQCIKQGYW (151 aa)).

This sequence belongs to the helicase family. SKI2 subfamily. Component of the RQT (ribosome quality control trigger) complex, composed of SLH1, CUE3, and RQT4. Interacts with CUE3. Interacts with RQT4. Interacts with HEL2. Associates with translating ribosomes.

The protein resides in the cytoplasm. The protein localises to the cytosol. The enzyme catalyses ATP + H2O = ADP + phosphate + H(+). Functionally, involved in activation of the ribosome quality control (RQC) pathway, a pathway that degrades nascent peptide chains during problematic translation. Drives the splitting of stalled ribosomes that are polyubiquitinated in a HEL2-dependent manner, as part of the ribosome quality control trigger (RQT) complex. Also represses the translation of non-poly(A) mRNAs together with SKI2. May block translation by inhibiting translation initiation factor 5B (FUN12) action on mRNAs lacking a 3' poly(A) structure. Involved in antiviral defense, preventing L-A dsRNA virus propagation by specifically blocking translation of viral mRNAs. The polypeptide is RQC trigger complex helicase SLH1 (Saccharomyces cerevisiae (strain ATCC 204508 / S288c) (Baker's yeast)).